A 4034-amino-acid chain; its full sequence is Polyketide synthase-nonribosomal peptide synthetase ACE1 (4034 aa).

Residues 10 to 448 form the Ketosynthase family 3 (KS3) domain; sequence TEPIAIIGSG…GANAHVILES (439 aa). Active-site for beta-ketoacyl synthase activity residues include cysteine 183, histidine 322, and histidine 368. Residues 560–879 are acyl transferase; that stretch reads VFTGQGAQWA…PYFGCLSRGT (320 aa). An N-terminal hotdog fold region spans residues 951-1082; sequence NELLGTRLPD…GDLVVLLGEP (132 aa). The 307-residue stretch at 951–1257 folds into the PKS/mFAS DH domain; it reads NELLGTRLPD…TKPLSPPSAA (307 aa). Residues 952–1252 form a dehydratase (DH) domain region; that stretch reads ELLGTRLPDD…LQGLHTKPLS (301 aa). The active-site Proton acceptor; for dehydratase activity is the histidine 983. The segment at 1097–1257 is C-terminal hotdog fold; that stretch reads MKDIDEERFY…TKPLSPPSAA (161 aa). Aspartate 1157 functions as the Proton donor; for dehydratase activity in the catalytic mechanism. The segment at 1396 to 1594 is methyltransferase (MT) domain; the sequence is NMLNRFYSDA…SGADIVTPHH (199 aa). Residues 2144–2317 form a ketoreductase (KR)domain region; sequence TYWLVGLTGG…AGSSVEIGCI (174 aa). The Carrier 1 domain maps to 2424–2505; sequence KSSEEVLDIL…LLLEFVQGLI (82 aa). An O-(pantetheine 4'-phosphoryl)serine modification is found at serine 2465. Residues 2512 to 2598 are disordered; sequence KLDGSDGADA…SPTTSASMAS (87 aa). A compositionally biased stretch (low complexity) spans 2556 to 2577; it reads PSGPASPTSPSSATASPGRSRS. The span at 2586-2598 shows a compositional bias: polar residues; the sequence is TPVSPTTSASMAS. The segment at 2608–3037 is condensation; that stretch reads TVPVSFGQSR…ATSLNRPAIY (430 aa). Residues 3073 to 3473 form an adenylation region; the sequence is KYATKFALRN…GGLIIEGRID (401 aa). In terms of domain architecture, Carrier 2 spans 3598 to 3678; it reads AELGSDQARM…AMTDLVLSDD (81 aa). At serine 3638 the chain carries O-(pantetheine 4'-phosphoryl)serine. The reductase-like stretch occupies residues 3719–3944; the sequence is LTGATGFLGR…DFVSVENVAA (226 aa).

Belongs to the NRP synthetase family.

The protein resides in the cytoplasm. It participates in secondary metabolite biosynthesis. Functionally, hybrid PKS-NRPS synthetase; part of the gene cluster that mediates the biosynthesis of a tyrosine-derived cytochalasan acting as a fungal signal recognized by resistant rice plants and leads to avirulence in Pi33 resistant rice cultivars. The first step in the pathway is catalyzed by the hybrid PKS-NRPS ACE1, assisted by the enoyl reductase RAP1, that are responsible for fusion of the tyrosine precursor and the polyketide backbone. The polyketide synthase module (PKS) of ACE1 is responsible for the synthesis of the polyketide backbone and the downstream nonribosomal peptide synthetase (NRPS) amidates the carboxyl end of the polyketide with the tyrosine precursor. Because ACE1 lacks a designated enoylreductase (ER) domain, the required activity is provided the enoyl reductase RAP1. Reduction by the hydrolyase ORFZ, followed by dehydration and intra-molecular Diels-Alder cyclization by the Diels-Alderase ORF3 then yield the required isoindolone-fused macrocycle. A number of oxidative steps catalyzed by the tailoring enzymes identified within the cluster, including cytochrome P450 monooxygenases CYP1 to CYP4, the FAD-linked oxidoreductase OXR2 and the short-chain dehydrogenase/reductase OXR1, are further required to afford the final cytochalasans that confer avirulence and which have still to be identified. The monooxygenase CYP1 has been shown to be a site-selective C-18 hydroxylase whereas the function of CYP3 is the site-selective epoxidation of the C-6/C-7 olefin that is present in some intermediate compounds. Finally, SYN2 and RAP2 are not required for avirulence in Pi33 resistant rice cultivars. The chain is Polyketide synthase-nonribosomal peptide synthetase ACE1 from Pyricularia oryzae (strain 70-15 / ATCC MYA-4617 / FGSC 8958) (Rice blast fungus).